The primary structure comprises 330 residues: tRNA-modifying protein YgfZ (330 aa).

Folate is bound by residues Trp-28 and Trp-190.

This sequence belongs to the tRNA-modifying YgfZ family.

The protein resides in the cytoplasm. Functionally, folate-binding protein involved in regulating the level of ATP-DnaA and in the modification of some tRNAs. It is probably a key factor in regulatory networks that act via tRNA modification, such as initiation of chromosomal replication. The protein is tRNA-modifying protein YgfZ of Serratia proteamaculans (strain 568).